Here is a 438-residue protein sequence, read N- to C-terminus: Probable glycine dehydrogenase (decarboxylating) subunit 1 (438 aa).

The protein belongs to the GcvP family. N-terminal subunit subfamily. The glycine cleavage system is composed of four proteins: P, T, L and H. In this organism, the P 'protein' is a heterodimer of two subunits.

It catalyses the reaction N(6)-[(R)-lipoyl]-L-lysyl-[glycine-cleavage complex H protein] + glycine + H(+) = N(6)-[(R)-S(8)-aminomethyldihydrolipoyl]-L-lysyl-[glycine-cleavage complex H protein] + CO2. In terms of biological role, the glycine cleavage system catalyzes the degradation of glycine. The P protein binds the alpha-amino group of glycine through its pyridoxal phosphate cofactor; CO(2) is released and the remaining methylamine moiety is then transferred to the lipoamide cofactor of the H protein. This chain is Probable glycine dehydrogenase (decarboxylating) subunit 1, found in Syntrophomonas wolfei subsp. wolfei (strain DSM 2245B / Goettingen).